The primary structure comprises 131 residues: Small ribosomal subunit protein eS17 (131 aa).

It belongs to the eukaryotic ribosomal protein eS17 family.

In Drosophila melanogaster (Fruit fly), this protein is Small ribosomal subunit protein eS17 (RpS17).